The chain runs to 1192 residues: Probable inactive serine/threonine-protein kinase DDB_G0280131 (1192 aa).

Disordered stretches follow at residues 23 to 90 (STIN…NLNE), 144 to 189 (DSSI…SQQD), 201 to 236 (VSISLPPPPTTEELPLPPPSTEELQLPPPPPTTTTA), 301 to 406 (SIPT…FKDS), and 478 to 499 (DLDDDITNKNNDNNSNGNNNNK). The segment covering 26–43 (NLNNNNSNNNNNNNNNGN) has biased composition (low complexity). The span at 44 to 60 (SATKISFQEQMPNGNGN) shows a compositional bias: polar residues. Low complexity-rich tracts occupy residues 61 to 73 (SSTTTTTAAQQSA) and 154 to 175 (SSYLSKNLSPPSNPSNIISNNN). Pro residues predominate over residues 201 to 232 (VSISLPPPPTTEELPLPPPSTEELQLPPPPPT). Residues 301–324 (SIPTPIVTPSTTTSTNTTTAATVN) show a composition bias toward low complexity. Residues 325–338 (KLNASKSPNGTLTT) are compositionally biased toward polar residues. Residues 362 to 376 (PTLSSPSPSQSAAPQ) show a composition bias toward low complexity. Positions 377 to 391 (PAAPQPTPTSQPQPP) are enriched in pro residues. Composition is skewed to low complexity over residues 392 to 402 (TTTVSTPVSPT) and 485 to 498 (NKNNDNNSNGNNNN). The region spanning 521-783 (AQPSDIIGSG…ILKILRQPLH (263 aa)) is the Protein kinase domain. ATP contacts are provided by residues 527-535 (IGSGNNGTT) and Lys549. Positions 790–831 (KPTQQQQQQQQQDQQQQQPEQQLTSSTSSTSTQDSLVSQEQV) are disordered. Residues 791-828 (PTQQQQQQQQQDQQQQQPEQQLTSSTSSTSTQDSLVSQ) are compositionally biased toward low complexity.

It belongs to the protein kinase superfamily. TKL Ser/Thr protein kinase family.

The polypeptide is Probable inactive serine/threonine-protein kinase DDB_G0280131 (Dictyostelium discoideum (Social amoeba)).